Reading from the N-terminus, the 242-residue chain is Stress response regulator protein 1 (242 aa).

The 119-residue stretch at 118-236 folds into the Response regulatory domain; sequence NFLLVDDNFI…FDHIITCIEK (119 aa). Asp-169 is modified (4-aspartylphosphate).

Required for stress adaptation, morphogenesis and virulence. This Debaryomyces hansenii (strain ATCC 36239 / CBS 767 / BCRC 21394 / JCM 1990 / NBRC 0083 / IGC 2968) (Yeast) protein is Stress response regulator protein 1 (SRR1).